Here is a 405-residue protein sequence, read N- to C-terminus: Tryptophan synthase beta chain (405 aa).

Lys-98 carries the N6-(pyridoxal phosphate)lysine modification.

It belongs to the TrpB family. As to quaternary structure, tetramer of two alpha and two beta chains. Pyridoxal 5'-phosphate serves as cofactor.

It carries out the reaction (1S,2R)-1-C-(indol-3-yl)glycerol 3-phosphate + L-serine = D-glyceraldehyde 3-phosphate + L-tryptophan + H2O. Its pathway is amino-acid biosynthesis; L-tryptophan biosynthesis; L-tryptophan from chorismate: step 5/5. Its function is as follows. The beta subunit is responsible for the synthesis of L-tryptophan from indole and L-serine. The sequence is that of Tryptophan synthase beta chain from Xanthomonas oryzae pv. oryzae (strain MAFF 311018).